A 3165-amino-acid chain; its full sequence is Protein eyes shut homolog (3165 aa).

The N-terminal stretch at 1–21 (MTDKSIIILSLMVFHSSFING) is a signal peptide. N-linked (GlcNAc...) asparagine glycans are attached at residues asparagine 42, asparagine 105, asparagine 117, and asparagine 166. EGF-like domains follow at residues 170–212 (KQQF…KYCQ), 213–254 (ELDA…KNCS), and 256–292 (IIVQ…PFCE). 9 disulfide bridges follow: cysteine 174/cysteine 189, cysteine 183/cysteine 200, cysteine 202/cysteine 211, cysteine 217/cysteine 228, cysteine 222/cysteine 242, cysteine 244/cysteine 253, cysteine 260/cysteine 270, cysteine 265/cysteine 280, and cysteine 282/cysteine 291. 3 N-linked (GlcNAc...) asparagine glycosylation sites follow: asparagine 252, asparagine 269, and asparagine 272. Residues asparagine 311 and asparagine 343 are each glycosylated (N-linked (GlcNAc...) asparagine). EGF-like domains lie at 332-368 (DVSE…LLCK) and 370-406 (FQTS…KNCE). Cystine bridges form between cysteine 341-cysteine 356 and cysteine 358-cysteine 367. Residue asparagine 382 is glycosylated (N-linked (GlcNAc...) asparagine). Cysteine 396 and cysteine 405 are disulfide-bonded. N-linked (GlcNAc...) asparagine glycosylation is found at asparagine 506, asparagine 520, asparagine 521, asparagine 566, and asparagine 573. 3 EGF-like domains span residues 566–602 (NITD…RLCV), 604–641 (NVDY…NICE), and 643–679 (DIED…TRCE). 2 disulfide bridges follow: cysteine 592-cysteine 601 and cysteine 608-cysteine 620. Residues asparagine 611 and asparagine 628 are each glycosylated (N-linked (GlcNAc...) asparagine). A disulfide bond links cysteine 629 and cysteine 640. Asparagine 654 carries N-linked (GlcNAc...) asparagine glycosylation. Cystine bridges form between cysteine 669–cysteine 678, cysteine 685–cysteine 696, cysteine 690–cysteine 705, and cysteine 707–cysteine 719. Positions 681 to 720 (DLDECALHPCKSGATCIDQPGNYFCQCGPPFKVVDGFSCL) constitute an EGF-like 9; calcium-binding domain. The EGF-like 10 domain occupies 733 to 769 (NIDNCILNAFEHNSTYKDLHLSYQCVCLSGWEGNFCE). N-linked (GlcNAc...) asparagine glycosylation occurs at asparagine 745. Intrachain disulfides connect cysteine 759/cysteine 768, cysteine 775/cysteine 786, cysteine 780/cysteine 795, cysteine 797/cysteine 806, cysteine 813/cysteine 824, cysteine 818/cysteine 835, cysteine 837/cysteine 846, cysteine 853/cysteine 866, cysteine 860/cysteine 876, cysteine 878/cysteine 887, cysteine 894/cysteine 905, cysteine 899/cysteine 914, cysteine 916/cysteine 925, cysteine 932/cysteine 943, cysteine 937/cysteine 952, cysteine 954/cysteine 963, cysteine 970/cysteine 981, cysteine 975/cysteine 990, cysteine 992/cysteine 1001, cysteine 1008/cysteine 1019, cysteine 1013/cysteine 1028, cysteine 1030/cysteine 1039, cysteine 1046/cysteine 1056, cysteine 1051/cysteine 1065, cysteine 1067/cysteine 1076, cysteine 1083/cysteine 1094, cysteine 1088/cysteine 1103, cysteine 1105/cysteine 1114, cysteine 1121/cysteine 1137, cysteine 1131/cysteine 1147, cysteine 1149/cysteine 1158, cysteine 1165/cysteine 1176, cysteine 1170/cysteine 1185, and cysteine 1187/cysteine 1196. Residues 771-807 (ESNECKMNPCKNNSTCTDLYKSYRCECTSGWTGQNCS) form the EGF-like 11; calcium-binding domain. N-linked (GlcNAc...) asparagine glycans are attached at residues asparagine 782, asparagine 783, and asparagine 805. EGF-like domains are found at residues 809–847 (EINE…QFCH), 849–888 (RYNP…KHCE), and 890–926 (DVKE…SLCE). N-linked (GlcNAc...) asparagine glycosylation is found at asparagine 862 and asparagine 863. The region spanning 928–964 (EINECSSEPCKNNGTCVDLTNRFFCNCEPGYHGPFCE) is the EGF-like 15; calcium-binding domain. An N-linked (GlcNAc...) asparagine glycan is attached at asparagine 940. The region spanning 966-1002 (EVNKCKISPCLDEENCVYRTDRYNCLCAPGYTGINCE) is the EGF-like 16 domain. The 37-residue stretch at 1004–1040 (NLDECLSEPCLHDGVCIDGINHYTCDCKSGFFGTHCE) folds into the EGF-like 17; calcium-binding domain. 3 consecutive EGF-like domains span residues 1042-1077 (NAND…IQCK), 1079-1115 (KIND…AYCE), and 1117-1159 (SIDN…QFCE). Positions 1161 to 1197 (NINECSSSPCLHGANCEDHINGYVCKCQPGWSGHHCE) constitute an EGF-like 21; calcium-binding domain. Residues asparagine 1509, asparagine 1906, asparagine 1941, and asparagine 2033 are each glycosylated (N-linked (GlcNAc...) asparagine). In terms of domain architecture, Laminin G-like 1 spans 1883 to 2063 (FSCVCYYGDS…AVRNYHINNC (181 aa)). Disulfide bonds link cysteine 2037–cysteine 2063, cysteine 2103–cysteine 2114, cysteine 2108–cysteine 2128, and cysteine 2130–cysteine 2139. Positions 2099 to 2140 (APSVCQEDVCHNGGTCRPIFLSSGIVSFQCDCPLHFTGRFCE) constitute an EGF-like 22 domain. The Laminin G-like 2 domain maps to 2145-2339 (LFFPSFSGNS…NIENCHVPWC (195 aa)). Residues asparagine 2170, asparagine 2185, and asparagine 2228 are each glycosylated (N-linked (GlcNAc...) asparagine). Intrachain disulfides connect cysteine 2308-cysteine 2339, cysteine 2339-cysteine 2350, cysteine 2344-cysteine 2359, cysteine 2375-cysteine 2386, cysteine 2380-cysteine 2396, and cysteine 2398-cysteine 2407. EGF-like domains follow at residues 2335–2368 (HVPW…YSGK) and 2371–2408 (QFAS…PLCT). N-linked (GlcNAc...) asparagine glycosylation is present at asparagine 2347. N-linked (GlcNAc...) asparagine glycosylation is found at asparagine 2412, asparagine 2453, asparagine 2484, asparagine 2506, and asparagine 2532. Positions 2419-2609 (SGTDAFGYTS…PNAGRSVGQC (191 aa)) constitute a Laminin G-like 3 domain. 3 disulfides stabilise this stretch: cysteine 2576–cysteine 2609, cysteine 2614–cysteine 2625, and cysteine 2619–cysteine 2634. EGF-like domains follow at residues 2610–2646 (HASP…AFCT) and 2648–2689 (TVSI…IYCE). The N-linked (GlcNAc...) asparagine glycan is linked to asparagine 2635. Disulfide bonds link cysteine 2636-cysteine 2645, cysteine 2652-cysteine 2668, cysteine 2662-cysteine 2677, and cysteine 2679-cysteine 2688. One can recognise a Laminin G-like 4 domain in the interval 2717 to 2895 (DPSFRSSELS…AKGGSNVGDC (179 aa)). Asparagine 2775, asparagine 2800, and asparagine 2824 each carry an N-linked (GlcNAc...) asparagine glycan. Intrachain disulfides connect cysteine 2868/cysteine 2895, cysteine 2900/cysteine 2911, cysteine 2905/cysteine 2920, and cysteine 2922/cysteine 2931. EGF-like domains lie at 2896–2932 (DGTA…NICN) and 2933–2970 (QSAY…RYCE). An N-linked (GlcNAc...) asparagine glycan is attached at asparagine 2914. Asparagine 2932 carries an N-linked (GlcNAc...) asparagine glycan. 3 disulfides stabilise this stretch: cysteine 2937-cysteine 2948, cysteine 2942-cysteine 2958, and cysteine 2960-cysteine 2969. Asparagine 2971, asparagine 3006, asparagine 3036, asparagine 3057, asparagine 3073, and asparagine 3082 each carry an N-linked (GlcNAc...) asparagine glycan. Residues 2975–3165 (FTTAKFMGNS…YDGDEQNEVT (191 aa)) enclose the Laminin G-like 5 domain.

The protein belongs to the EYS family. In terms of tissue distribution, expressed in retina (at protein level).

It is found in the cell projection. The protein resides in the cilium. The protein localises to the photoreceptor outer segment. Its subcellular location is the cytoplasm. It localises to the cytoskeleton. It is found in the cilium axoneme. The protein resides in the microtubule organizing center. The protein localises to the centrosome. Its subcellular location is the secreted. It localises to the extracellular space. It is found in the extracellular matrix. The protein resides in the interphotoreceptor matrix. Its function is as follows. Required to maintain the integrity of photoreceptor cells. Specifically required for normal morphology of the photoreceptor ciliary pocket, and might thus facilitate protein trafficking between the photoreceptor inner and outer segments via the transition zone. The chain is Protein eyes shut homolog from Macaca fascicularis (Crab-eating macaque).